A 737-amino-acid polypeptide reads, in one-letter code: MWLLLHVILLTEVKDFALADSSMVAPLCPKGYFPCGNLTKCLPRAFHCDGVDDCGNGADEDNCGDTSGWTTIFGTVHGNVNKVTLTQECFLSQYPQHCYCRENELECVKADLKAVPKVSSNVTLLSLKKNKIHRLPVKVFSRYTELRKIYLQHNCITHISRRAFLGLHNLQILYLSHNCITSLRPGIFKDLHQLAWLILDDNPITRISQKSFMGLNSLFFLSMVGNRLEALPETLCAQMPQLNWVDLANNGIKYITNSTFLTCDSLTVLFLPRNQIGFVPEKTFSSLKNLGELDLSSNMITKLPVHLFSDLHLLQKLNLSSNPLLYVHKNQFGSLKQLQSLDLERIEIPNISTGMFQPMKNLSHIYLKTFRYCSYVPHVRICMPSTDGISSSEDLLANGILRVSVWVIAFITCVGNFLVIAVRSLIKAENTTHAMSIKILCCADCLMGVYLFSVGVFDIKYRGQYQKYALLWMESVPCRLLGFLATLSTEVSVLLLTFLTLEKFLVIVFPFSNLRLGKRQTAVALASIWVVGFLIAAVPFTREDYFGNFYGKNGVCFPLHYDQAEDFGSRGYSLGIFLGVNLLAFLVIVISYVTMFCSIHKTALQTAEVRSHIGKEVAVANRFFFIVFSDAICWIPVFVVKILSLLQVEIPGTITSWIVVFFLPVNSALNPILYTLTTSFFKDKLKQLLHKHRRKPIFKVKKKSLSASIVWTDESSLKLGVLSKIALGDSIMKPVSP.

Over 1–399 the chain is Extracellular; sequence MWLLLHVILL…SSSEDLLANG (399 aa). Positions 27–64 constitute an LDL-receptor class A domain; that stretch reads LCPKGYFPCGNLTKCLPRAFHCDGVDDCGNGADEDNCG. Disulfide bonds link Cys-28–Cys-41, Cys-35–Cys-54, and Cys-48–Cys-63. Residue Asn-37 is glycosylated (N-linked (GlcNAc...) asparagine). Asn-121 is a glycosylation site (N-linked (GlcNAc...) asparagine). LRR repeat units follow at residues 121-142, 145-166, 169-190, 193-214, 217-238, 241-262, 265-286, 289-310, 313-334, and 337-358; these read NVTLLSLKKNKIHRLPVKVFSR, ELRKIYLQHNCITHISRRAFLG, NLQILYLSHNCITSLRPGIFKD, QLAWLILDDNPITRISQKSFMG, SLFFLSMVGNRLEALPETLCAQ, QLNWVDLANNGIKYITNSTFLT, SLTVLFLPRNQIGFVPEKTFSS, NLGELDLSSNMITKLPVHLFSD, LLQKLNLSSNPLLYVHKNQFGS, and QLQSLDLERIEIPNISTGMFQP. Asn-257 is a glycosylation site (N-linked (GlcNAc...) asparagine). N-linked (GlcNAc...) asparagine glycans are attached at residues Asn-318, Asn-350, and Asn-361. Residues 400–420 traverse the membrane as a helical segment; that stretch reads ILRVSVWVIAFITCVGNFLVI. The Cytoplasmic portion of the chain corresponds to 421-438; the sequence is AVRSLIKAENTTHAMSIK. A helical membrane pass occupies residues 439–459; the sequence is ILCCADCLMGVYLFSVGVFDI. Residues 460 to 478 are Extracellular-facing; that stretch reads KYRGQYQKYALLWMESVPC. Cys-478 and Cys-556 are disulfide-bonded. The helical transmembrane segment at 479 to 501 threads the bilayer; that stretch reads RLLGFLATLSTEVSVLLLTFLTL. Residues 502–520 are Cytoplasmic-facing; that stretch reads EKFLVIVFPFSNLRLGKRQ. The chain crosses the membrane as a helical span at residues 521 to 541; sequence TAVALASIWVVGFLIAAVPFT. The Extracellular portion of the chain corresponds to 542-575; that stretch reads REDYFGNFYGKNGVCFPLHYDQAEDFGSRGYSLG. Residues 576 to 596 traverse the membrane as a helical segment; it reads IFLGVNLLAFLVIVISYVTMF. Topologically, residues 597 to 622 are cytoplasmic; that stretch reads CSIHKTALQTAEVRSHIGKEVAVANR. Residues 623-643 form a helical membrane-spanning segment; sequence FFFIVFSDAICWIPVFVVKIL. The Extracellular segment spans residues 644 to 653; it reads SLLQVEIPGT. A helical membrane pass occupies residues 654–674; the sequence is ITSWIVVFFLPVNSALNPILY. Topologically, residues 675 to 737 are cytoplasmic; sequence TLTTSFFKDK…GDSIMKPVSP (63 aa).

Belongs to the G-protein coupled receptor 1 family. Expressed in embryonic and adult gonads of males and females, as well in male gubernarculum. Expressed also in brain. Not detected in kidney, spleen and heart.

It is found in the cell membrane. Receptor for relaxin. The activity of this receptor is mediated by G proteins leading to stimulation of adenylate cyclase and an increase of cAMP. May also be a receptor for Leydig insulin-like peptide (INSL3). This is Relaxin receptor 2 (Rxfp2) from Mus musculus (Mouse).